The chain runs to 561 residues: Putative transport protein AHA_2450 (561 aa).

The next 5 helical transmembrane spans lie at leucine 8–glycine 28, isoleucine 37–phenylalanine 57, phenylalanine 66–leucine 86, isoleucine 90–leucine 110, and asparagine 161–valine 181. RCK C-terminal domains lie at serine 206–asparagine 291 and lysine 293–phenylalanine 376. 5 consecutive transmembrane segments (helical) span residues leucine 386–phenylalanine 406, leucine 409–leucine 429, leucine 450–histidine 470, alanine 476–phenylalanine 496, and threonine 541–phenylalanine 561.

The protein belongs to the AAE transporter (TC 2.A.81) family. YbjL subfamily.

The protein localises to the cell membrane. This chain is Putative transport protein AHA_2450, found in Aeromonas hydrophila subsp. hydrophila (strain ATCC 7966 / DSM 30187 / BCRC 13018 / CCUG 14551 / JCM 1027 / KCTC 2358 / NCIMB 9240 / NCTC 8049).